A 281-amino-acid chain; its full sequence is Pantothenate synthetase (281 aa).

Residue 30 to 37 coordinates ATP; the sequence is MGYLHEGH. The Proton donor role is filled by His37. Gln61 serves as a coordination point for (R)-pantoate. Position 61 (Gln61) interacts with beta-alanine. Position 147-150 (147-150) interacts with ATP; sequence GEKD. Gln153 contacts (R)-pantoate. Residues Val176 and 184-187 contribute to the ATP site; that span reads MSSR.

Belongs to the pantothenate synthetase family. Homodimer.

The protein localises to the cytoplasm. It catalyses the reaction (R)-pantoate + beta-alanine + ATP = (R)-pantothenate + AMP + diphosphate + H(+). Its pathway is cofactor biosynthesis; (R)-pantothenate biosynthesis; (R)-pantothenate from (R)-pantoate and beta-alanine: step 1/1. Its function is as follows. Catalyzes the condensation of pantoate with beta-alanine in an ATP-dependent reaction via a pantoyl-adenylate intermediate. The chain is Pantothenate synthetase from Desulfatibacillum aliphaticivorans.